A 286-amino-acid polypeptide reads, in one-letter code: ATP phosphoribosyltransferase (286 aa).

It belongs to the ATP phosphoribosyltransferase family. Long subfamily. Requires Mg(2+) as cofactor.

Its subcellular location is the cytoplasm. The catalysed reaction is 1-(5-phospho-beta-D-ribosyl)-ATP + diphosphate = 5-phospho-alpha-D-ribose 1-diphosphate + ATP. The protein operates within amino-acid biosynthesis; L-histidine biosynthesis; L-histidine from 5-phospho-alpha-D-ribose 1-diphosphate: step 1/9. With respect to regulation, feedback inhibited by histidine. Its function is as follows. Catalyzes the condensation of ATP and 5-phosphoribose 1-diphosphate to form N'-(5'-phosphoribosyl)-ATP (PR-ATP). Has a crucial role in the pathway because the rate of histidine biosynthesis seems to be controlled primarily by regulation of HisG enzymatic activity. The polypeptide is ATP phosphoribosyltransferase (Arthrobacter sp. (strain FB24)).